A 339-amino-acid polypeptide reads, in one-letter code: MNQWMDLAERVLDGAEVTNQEALAILNCPDEDLLLLMHAAFHIRKRFYGKKVKLNMIMNAKSGLCPENCGYCSQSSISKAPIESYRMVDKHILLKGAKRAHDLNIGTYCIVASGRGPSNREVDQVVDAVKEIKETYGLKICACLGLLKPEQAERLKQAGVDRYNHNINTSQRNHSNITTSHTYDDRVNTVETAKQSGMSPCSGVIVGMKETKQDVIDMANSLKALDADSIPVNFLHAIDGTPLEGVSELHPVYCLKVLALFRFINPSKEIRISGGREVNLRSLQPLGLYAANSIFVGDYLTTAGQQETEDHQMLHDLGFEVESVEEMKAGLQSACNTEV.

In terms of domain architecture, Radical SAM core spans 47–276 (FYGKKVKLNM…SKEIRISGGR (230 aa)). Residues cysteine 65, cysteine 69, and cysteine 72 each contribute to the [4Fe-4S] cluster site. Residues cysteine 109, cysteine 141, cysteine 201, and arginine 271 each coordinate [2Fe-2S] cluster.

It belongs to the radical SAM superfamily. Biotin synthase family. Homodimer. It depends on [4Fe-4S] cluster as a cofactor. The cofactor is [2Fe-2S] cluster.

It catalyses the reaction (4R,5S)-dethiobiotin + (sulfur carrier)-SH + 2 reduced [2Fe-2S]-[ferredoxin] + 2 S-adenosyl-L-methionine = (sulfur carrier)-H + biotin + 2 5'-deoxyadenosine + 2 L-methionine + 2 oxidized [2Fe-2S]-[ferredoxin]. Its pathway is cofactor biosynthesis; biotin biosynthesis; biotin from 7,8-diaminononanoate: step 2/2. Catalyzes the conversion of dethiobiotin (DTB) to biotin by the insertion of a sulfur atom into dethiobiotin via a radical-based mechanism. The polypeptide is Biotin synthase (Bacillus velezensis (strain DSM 23117 / BGSC 10A6 / LMG 26770 / FZB42) (Bacillus amyloliquefaciens subsp. plantarum)).